Consider the following 961-residue polypeptide: Retinoblastoma-related protein 1 (961 aa).

Positions 404–606 are domain A; that stretch reads TPVSTAMTTA…EKGSSMYNSL (203 aa). A pocket region spans residues 404-819; the sequence is TPVSTAMTTA…NEMFIPSVKP (416 aa). Positions 607-728 are spacer; sequence AVAKPSLAAE…PGGGGETCAE (122 aa). The interval 729-819 is domain B; it reads TAINVFFGKI…NEMFIPSVKP (91 aa). The disordered stretch occupies residues 829–856; sequence NAEKNNHNDGQGPASPKPSPFPKLPDMS.

The protein belongs to the retinoblastoma protein (RB) family.

The protein localises to the nucleus. Regulator of biological processes that recruits a histone deacetylase to control gene transcription. May play a role in the entry into mitosis, negatively regulating the cell proliferation. Formation of stable complexes with geminiviridae replication-associated proteins may create a cellular environment which favors viral DNA replication. This Nicotiana tabacum (Common tobacco) protein is Retinoblastoma-related protein 1 (RB1).